Consider the following 226-residue polypeptide: UPF0502 protein Daci_5373 (226 aa).

Belongs to the UPF0502 family.

This Delftia acidovorans (strain DSM 14801 / SPH-1) protein is UPF0502 protein Daci_5373.